Here is a 441-residue protein sequence, read N- to C-terminus: ATP-dependent protease ATPase subunit HslU (441 aa).

Residues Ile-18, 60 to 65 (GVGKTE), Asp-254, Glu-319, and Arg-391 contribute to the ATP site.

This sequence belongs to the ClpX chaperone family. HslU subfamily. In terms of assembly, a double ring-shaped homohexamer of HslV is capped on each side by a ring-shaped HslU homohexamer. The assembly of the HslU/HslV complex is dependent on binding of ATP.

It localises to the cytoplasm. In terms of biological role, ATPase subunit of a proteasome-like degradation complex; this subunit has chaperone activity. The binding of ATP and its subsequent hydrolysis by HslU are essential for unfolding of protein substrates subsequently hydrolyzed by HslV. HslU recognizes the N-terminal part of its protein substrates and unfolds these before they are guided to HslV for hydrolysis. The sequence is that of ATP-dependent protease ATPase subunit HslU from Shewanella sediminis (strain HAW-EB3).